A 474-amino-acid polypeptide reads, in one-letter code: MTILTYPFKNLPTASKWALRFSIRPLSCSSQLRAAPAVQTKTKKTLAKPNIRNVVVVDGVRTPFLLSGTSYKDLMPHDLARAALTGLLHRTSVPKEVVDYIIFGTVIQEVKTSNVAREAALGAGFSDKTPAHTVTMACISANQAMTTGVGLIASGQCDVIVAGGVELMSDVPIRHSRKMRKLMLDLNKAKSMGQRLSLISKFRFNFLAPELPAVSEFSTSETMGHSADRLAAAFAVSRLEQDEYALRSHSLAKKAQDEGLLSDVVPFKVPGKDTVTKDNGIRPSSLEQMAKLKPAFIKPYGTVTAANSSFLTDGASAMLIMAEEKALAMGYKPKAYLRDFMYVSQDPKDQLLLGPTYATPKVLEKAGLTMNDIDAFEFHEAFSGQILANFKAMDSDWFAENYMGRKTKVGLPPLEKFNNWGGSLSLGHPFGATGCRLVMAAANRLRKEGGQYGLVAACAAGGQGHAMIVEAYPK.

A mitochondrion-targeting transit peptide spans 1 to 33 (MTILTYPFKNLPTASKWALRFSIRPLSCSSQLR). Lys-72 is subject to N6-acetyllysine; alternate. Lys-72 is modified (N6-succinyllysine; alternate). Catalysis depends on Cys-138, which acts as the Acyl-thioester intermediate. Residues 173–220 (IRHSRKMRKLMLDLNKAKSMGQRLSLISKFRFNFLAPELPAVSEFSTS) lie within the membrane without spanning it. Lys-188 carries the post-translational modification N6-acetyllysine; alternate. At Lys-188 the chain carries N6-succinyllysine; alternate. An N6-succinyllysine mark is found at Lys-190, Lys-272, and Lys-291. Lys-293 is subject to N6-acetyllysine; alternate. Lys-293 bears the N6-succinyllysine; alternate mark. Lys-298 bears the N6-acetyllysine mark. Residue Lys-332 is modified to N6-acetyllysine; alternate. Lys-332 carries the post-translational modification N6-succinyllysine; alternate. An N6-acetyllysine mark is found at Lys-348 and Lys-361. Catalysis depends on Cys-458, which acts as the Proton donor/acceptor.

Belongs to the thiolase-like superfamily. Thiolase family. In terms of assembly, heterotetramer of 2 alpha/HADHA and 2 beta/HADHB subunits; forms the mitochondrial trifunctional enzyme. Also purified as higher order heterooligomers including a 4 alpha/HADHA and 4 beta/HADHB heterooligomer which physiological significance remains unclear. The mitochondrial trifunctional enzyme interacts with MTLN. Interacts with RSAD2/viperin.

It localises to the mitochondrion. The protein resides in the mitochondrion inner membrane. The protein localises to the mitochondrion outer membrane. It is found in the endoplasmic reticulum. The enzyme catalyses an acyl-CoA + acetyl-CoA = a 3-oxoacyl-CoA + CoA. The catalysed reaction is butanoyl-CoA + acetyl-CoA = 3-oxohexanoyl-CoA + CoA. It catalyses the reaction hexanoyl-CoA + acetyl-CoA = 3-oxooctanoyl-CoA + CoA. It carries out the reaction octanoyl-CoA + acetyl-CoA = 3-oxodecanoyl-CoA + CoA. The enzyme catalyses decanoyl-CoA + acetyl-CoA = 3-oxododecanoyl-CoA + CoA. The catalysed reaction is dodecanoyl-CoA + acetyl-CoA = 3-oxotetradecanoyl-CoA + CoA. It catalyses the reaction tetradecanoyl-CoA + acetyl-CoA = 3-oxohexadecanoyl-CoA + CoA. It participates in lipid metabolism; fatty acid beta-oxidation. Mitochondrial trifunctional enzyme catalyzes the last three of the four reactions of the mitochondrial beta-oxidation pathway. The mitochondrial beta-oxidation pathway is the major energy-producing process in tissues and is performed through four consecutive reactions breaking down fatty acids into acetyl-CoA. Among the enzymes involved in this pathway, the trifunctional enzyme exhibits specificity for long-chain fatty acids. Mitochondrial trifunctional enzyme is a heterotetrameric complex composed of two proteins, the trifunctional enzyme subunit alpha/HADHA carries the 2,3-enoyl-CoA hydratase and the 3-hydroxyacyl-CoA dehydrogenase activities, while the trifunctional enzyme subunit beta/HADHB described here bears the 3-ketoacyl-CoA thiolase activity. The polypeptide is Trifunctional enzyme subunit beta, mitochondrial (HADHB) (Homo sapiens (Human)).